The following is a 427-amino-acid chain: Synaptotagmin-A (427 aa).

Over Met-1 to Lys-57 the chain is Vesicular. An N-linked (GlcNAc...) asparagine glycan is attached at Asn-26. Residues Ile-58–Cys-84 form a helical membrane-spanning segment. The Cytoplasmic portion of the chain corresponds to Lys-85–Lys-427. Positions Lys-96–Asp-145 are disordered. Basic and acidic residues predominate over residues Lys-109–Lys-124. Residues Glu-141–Asn-387 form a phospholipid binding region. 2 consecutive C2 domains span residues Lys-147–Arg-266 and Lys-278–His-411. Ca(2+) is bound by residues Leu-177, Asp-178, Asp-184, Asp-236, Phe-237, Asp-238, Ser-241, Lys-242, Asp-244, Asp-309, Asp-315, Asp-369, Asp-371, and Asp-377.

Belongs to the synaptotagmin family. As to quaternary structure, homodimer or homotrimer (possible). The cofactor is Ca(2+). In terms of tissue distribution, forebrain, cerebellum and neuroendocrine cells.

It is found in the cytoplasmic vesicle. Its subcellular location is the secretory vesicle. It localises to the synaptic vesicle membrane. The protein localises to the synapse. Functionally, may have a regulatory role in the membrane interactions during trafficking of synaptic vesicles at the active zone of the synapse. It binds acidic phospholipids with a specificity that requires the presence of both an acidic head group and a diacyl backbone. The sequence is that of Synaptotagmin-A (P65-A) from Diplobatis ommata (Ocellated electric ray).